The primary structure comprises 661 residues: Ecdysteroid-phosphate phosphatase (661 aa).

The UBA domain occupies 16–57 (KQDVSPLQILLQMGFRRQRALKALAATGNRSVQLASDWLLTH). The SH3 domain maps to 235–300 (ANHQVYKVTQ…PAVYTRRTAE (66 aa)). Arg409 is an active-site residue. His410 serves as the catalytic Tele-phosphohistidine intermediate. The active site involves His590.

As to quaternary structure, homodimer. As to expression, detected in non-diapause eggs, with highest expression between 2 and 5 days after oviposition. Not detected in other tissues tested.

It is found in the cytoplasm. The protein localises to the cytosol. The enzyme catalyses ecdysone 22-phosphate + H2O = ecdysone + phosphate. It catalyses the reaction 20-hydroxyecdysone 22-phosphate + H2O = 20-hydroxyecdysone + phosphate. The catalysed reaction is 2-deoxyecdysone 22-phosphate + H2O = 2-deoxyecdysone + phosphate. It carries out the reaction O-phospho-L-tyrosyl-[protein] + H2O = L-tyrosyl-[protein] + phosphate. With respect to regulation, competitively inhibited by 4-nitrophenyl phosphate (para-nitrophenylphosphate, pNPP). Also inhibited by tungstate, vanadate, and phosphate. Steroid phosphatase which catalyzes the conversion of inactive phosphorylated ecdysteroids into their active forms. Shows high activity towards ecdysone 22-phosphate (E22P). Has lower activity towards other ecdysteriod phosphates including 20-hydroxyecdysone 22-phosphate (20E22P) and 2-deoxyecdysone 22-phosphate (2dE22P). Also has protein tyrosine phosphatase activity. In Bombyx mori (Silk moth), this protein is Ecdysteroid-phosphate phosphatase.